An 820-amino-acid polypeptide reads, in one-letter code: Phenylalanine--tRNA ligase beta subunit (820 aa).

Positions P39–R150 constitute a tRNA-binding domain. In terms of domain architecture, B5 spans E435–E510. Mg(2+)-binding residues include D488, D494, E497, and E498. The region spanning S727 to R818 is the FDX-ACB domain.

The protein belongs to the phenylalanyl-tRNA synthetase beta subunit family. Type 1 subfamily. As to quaternary structure, tetramer of two alpha and two beta subunits. Mg(2+) serves as cofactor.

The protein localises to the cytoplasm. The catalysed reaction is tRNA(Phe) + L-phenylalanine + ATP = L-phenylalanyl-tRNA(Phe) + AMP + diphosphate + H(+). The polypeptide is Phenylalanine--tRNA ligase beta subunit (pheT) (Deinococcus radiodurans (strain ATCC 13939 / DSM 20539 / JCM 16871 / CCUG 27074 / LMG 4051 / NBRC 15346 / NCIMB 9279 / VKM B-1422 / R1)).